The chain runs to 363 residues: UDP-3-O-acylglucosamine N-acyltransferase (363 aa).

His-252 functions as the Proton acceptor in the catalytic mechanism.

It belongs to the transferase hexapeptide repeat family. LpxD subfamily. As to quaternary structure, homotrimer.

It carries out the reaction a UDP-3-O-[(3R)-3-hydroxyacyl]-alpha-D-glucosamine + a (3R)-hydroxyacyl-[ACP] = a UDP-2-N,3-O-bis[(3R)-3-hydroxyacyl]-alpha-D-glucosamine + holo-[ACP] + H(+). It functions in the pathway bacterial outer membrane biogenesis; LPS lipid A biosynthesis. Catalyzes the N-acylation of UDP-3-O-acylglucosamine using 3-hydroxyacyl-ACP as the acyl donor. Is involved in the biosynthesis of lipid A, a phosphorylated glycolipid that anchors the lipopolysaccharide to the outer membrane of the cell. This Cupriavidus taiwanensis (strain DSM 17343 / BCRC 17206 / CCUG 44338 / CIP 107171 / LMG 19424 / R1) (Ralstonia taiwanensis (strain LMG 19424)) protein is UDP-3-O-acylglucosamine N-acyltransferase.